The chain runs to 275 residues: Membrane protein insertase YidC 1 (275 aa).

An N-terminal signal peptide occupies residues 1-25 (MRKVLRVKKNIKIARIVPLVLLLVA). C26 carries N-palmitoyl cysteine lipidation. C26 carries the S-diacylglycerol cysteine lipid modification. A run of 5 helical transmembrane segments spans residues 58 to 78 (SIGV…MPLF), 129 to 149 (YASL…FQAL), 171 to 191 (LYLL…LTNL), 198 to 216 (VMMT…FMGF), and 222 to 240 (VVLY…LLLL).

Belongs to the OXA1/ALB3/YidC family. Type 2 subfamily.

It localises to the cell membrane. Required for the insertion and/or proper folding and/or complex formation of integral membrane proteins into the membrane. Involved in integration of membrane proteins that insert both dependently and independently of the Sec translocase complex, as well as at least some lipoproteins. This chain is Membrane protein insertase YidC 1, found in Streptococcus pyogenes serotype M6 (strain ATCC BAA-946 / MGAS10394).